The following is a 101-amino-acid chain: NAD(P)H-quinone oxidoreductase subunit 4L, chloroplastic (101 aa).

A run of 3 helical transmembrane segments spans residues 2 to 22 (MFERVLFLSVYLFSIGIYGLI), 32 to 52 (ICLELILNSINLNLVTFSDLF), and 61 to 81 (IFAIFVIALAAAEAAIGLSIL).

It belongs to the complex I subunit 4L family. In terms of assembly, NDH is composed of at least 16 different subunits, 5 of which are encoded in the nucleus.

The protein localises to the plastid. It localises to the chloroplast thylakoid membrane. It carries out the reaction a plastoquinone + NADH + (n+1) H(+)(in) = a plastoquinol + NAD(+) + n H(+)(out). It catalyses the reaction a plastoquinone + NADPH + (n+1) H(+)(in) = a plastoquinol + NADP(+) + n H(+)(out). Its function is as follows. NDH shuttles electrons from NAD(P)H:plastoquinone, via FMN and iron-sulfur (Fe-S) centers, to quinones in the photosynthetic chain and possibly in a chloroplast respiratory chain. The immediate electron acceptor for the enzyme in this species is believed to be plastoquinone. Couples the redox reaction to proton translocation, and thus conserves the redox energy in a proton gradient. This chain is NAD(P)H-quinone oxidoreductase subunit 4L, chloroplastic, found in Zea mays (Maize).